Reading from the N-terminus, the 154-residue chain is Small ribosomal subunit protein uS9 (154 aa).

The segment at 133 to 154 (RAKESKKYGLKKARKAPQYSKR) is disordered. Over residues 140–154 (YGLKKARKAPQYSKR) the composition is skewed to basic residues.

The protein belongs to the universal ribosomal protein uS9 family.

The protein is Small ribosomal subunit protein uS9 of Salinispora tropica (strain ATCC BAA-916 / DSM 44818 / JCM 13857 / NBRC 105044 / CNB-440).